Consider the following 130-residue polypeptide: uncharacterized protein (130 aa).

This is an uncharacterized protein from Orgyia pseudotsugata multicapsid polyhedrosis virus (OpMNPV).